Reading from the N-terminus, the 419-residue chain is LWamide neuropeptides (419 aa).

The first 27 residues, 1–27, serve as a signal peptide directing secretion; that stretch reads MEKEMRNLMLLVLLTVILDNGIGKCNA. Positions 27 to 48 are disordered; it reads AKSEEDQDGNARNNRIDKNDDN. The propeptide occupies 28–104; that stretch reads KSEEDQDGNA…ENLDIDSTVQ (77 aa). The residue at position 110 (tryptophan 110) is a Tryptophan amide. A propeptide spanning residues 113 to 140 is cleaved from the precursor; the sequence is EADFDNTRAHDSAQISDEKQSGLWVGDA. Over residues 120–132 the composition is skewed to basic and acidic residues; sequence RAHDSAQISDEKQ. Positions 120-332 are disordered; sequence RAHDSAQISD…PGLWGRQVED (213 aa). Tryptophan 146 is modified (tryptophan amide). The propeptide occupies 149–150; sequence DA. Tryptophan 156 is modified (tryptophan amide). Positions 159-160 are excised as a propeptide; it reads DA. A Tryptophan amide modification is found at tryptophan 166. A propeptide spanning residues 169–170 is cleaved from the precursor; it reads DA. At tryptophan 176 the chain carries Tryptophan amide. Positions 179–180 are excised as a propeptide; the sequence is DA. Tryptophan amide is present on tryptophan 186. Residues 189–190 constitute a propeptide that is removed on maturation; sequence DA. Tryptophan 196 carries the post-translational modification Tryptophan amide. Positions 199–200 are excised as a propeptide; that stretch reads DA. Tryptophan 206 is subject to Tryptophan amide. A propeptide spanning residues 209–210 is cleaved from the precursor; it reads DA. A Tryptophan amide modification is found at tryptophan 216. Positions 218–220 are cleaved as a propeptide — seems to have a sequencing error or a mutation in position 218; Gly instead of Arg; sequence GDA. At tryptophan 226 the chain carries Tryptophan amide. The propeptide occupies 229-230; that stretch reads DA. At tryptophan 236 the chain carries Tryptophan amide. Residues 239–240 constitute a propeptide that is removed on maturation; it reads DA. Tryptophan 246 bears the Tryptophan amide mark. Residues 249–250 constitute a propeptide that is removed on maturation; the sequence is DA. Tryptophan 256 is modified (tryptophan amide). Positions 259–260 are excised as a propeptide; that stretch reads DA. Position 266 is a tryptophan amide (tryptophan 266). Positions 269 to 270 are excised as a propeptide; it reads DA. A Tryptophan amide modification is found at tryptophan 276. Residues 279–280 constitute a propeptide that is removed on maturation; sequence DT. Tryptophan 286 is subject to Tryptophan amide. A propeptide spanning residues 289 to 290 is cleaved from the precursor; that stretch reads DA. A Tryptophan amide modification is found at tryptophan 296. 2 propeptides span residues 299 to 300 and 309 to 320; these read DA and DNNVIKSRSDDA. Tryptophan 326 carries the post-translational modification Tryptophan amide. The propeptide occupies 329-419; it reads QVEDGPTKIW…RRNNKKNNKF (91 aa).

It belongs to the LWamide neuropeptide family. As to expression, in planula larvae, expressed in a narrow ring of ectodermal neurosensory cells around the widest circumference at the anterior of the larvae. In primary polyps, expression is confined to endodermal cells of the hypostome. In mature polyps, expression is strong in the epidermis from the tentacle level to the base of the polyp and weak in the gastrodermal cells in the apical hypostome.

It localises to the secreted. Its function is as follows. LWamide peptides may be involved in induction of metamorphosis. This chain is LWamide neuropeptides, found in Hydractinia echinata (Snail fur).